Consider the following 258-residue polypeptide: MARKSFGQHFLLDLNVTRKIARLAQVGEGDTVVEVGPGPGGLTRALLETGARVVAIEKDSRFLPLLAEVAEVAEGRLELVEGDALKVDAAQAAGGPAHVVSNLPYNVGTQLLINWLTGPFRPLSMTLMFQKEVADRIVAQPGDDAYGRLAVIAQTLCEARTVMDLPAKAFTPPPKVASAVVRLVPKAEPPPAEVVAALERVTAAAFGQRRKMLRSSLKALGGADLCERAGVSPDARAEVIDLAGFLDLARATLGGADQ.

S-adenosyl-L-methionine-binding residues include H9, L11, G36, E57, D83, and N102.

Belongs to the class I-like SAM-binding methyltransferase superfamily. rRNA adenine N(6)-methyltransferase family. RsmA subfamily.

Its subcellular location is the cytoplasm. It catalyses the reaction adenosine(1518)/adenosine(1519) in 16S rRNA + 4 S-adenosyl-L-methionine = N(6)-dimethyladenosine(1518)/N(6)-dimethyladenosine(1519) in 16S rRNA + 4 S-adenosyl-L-homocysteine + 4 H(+). In terms of biological role, specifically dimethylates two adjacent adenosines (A1518 and A1519) in the loop of a conserved hairpin near the 3'-end of 16S rRNA in the 30S particle. May play a critical role in biogenesis of 30S subunits. In Caulobacter vibrioides (strain ATCC 19089 / CIP 103742 / CB 15) (Caulobacter crescentus), this protein is Ribosomal RNA small subunit methyltransferase A.